Here is a 461-residue protein sequence, read N- to C-terminus: FAD-dependent monooxygenase nodY2 (461 aa).

Residues E48 and R136 each coordinate FAD. The active site involves R214. FAD-binding residues include D338 and G351.

Belongs to the paxM FAD-dependent monooxygenase family. FAD is required as a cofactor.

The protein operates within secondary metabolite biosynthesis. In terms of biological role, FAD-dependent monooxygenase; part of the gene cluster that mediates the biosynthesis of the indole diterpenes nodulisporic acids (NA). Nodulisporic acid A (NAA) and its chemically modified derivatives are of particular significance because of their highly potent insecticidal activity against blood-feeding arthropods and lack of observable adverse effects on mammals, in particular the tremogenicity associated with the paspaline-derived IDTs is not observed. The geranylgeranyl diphosphate (GGPP) synthase ggs1, localized outside of the cluster, is proposed to catalyze the first step in nodulisporic acid biosynthesis via conversion of farnesyl pyrophosphate and isopentyl pyrophosphate into geranylgeranyl pyrophosphate (GGPP). Condensation of indole-3-glycerol phosphate with GGPP by the prenyl transferase nodC then forms 3-geranylgeranylindole (3-GGI). Epoxidation by the FAD-dependent monooxygenase nodM leads to a single-epoxidized-GGI that is substrate of the terpene cyclase nodB for cyclization to yield emindole SB. The terminal methyl carbon, C28, of emindole SB is then oxidized by the cytochrome P450 monooxygenase nodW to produce nodulisporic acid F (NAF), the pentacyclic core of NAA. NAF is converted to nodulisporic acid E (NAE) via prenylation. This step is probably performed by one of the indole diterpene prenyltransferases nodD1 or nodD2. Several oxidation steps performed by the FAD-linked oxidoreductase nodO and one of the cytochrome P450 monooxygenase nodR, nodX or nodZ further convert NAE to nodulisporic acid D (NAD). NAD is substrate of cytochrome P450 monooxygenase nodJ to produce the precursor of nodulisporic acid C (NAC), converted to NAC by one of the indole diterpene prenyltransferases nodD1 or nodD2. The FAD-dependent monooxygenase nodY2 then oxidizes NAC to nodulisporic acid B (NAB). Finally NAB is converted to NAA by one of the cytochrome P450 monooxygenases nodR, nodX or nodZ. The chain is FAD-dependent monooxygenase nodY2 from Hypoxylon pulicicidum.